We begin with the raw amino-acid sequence, 256 residues long: Major prion protein (256 aa).

The N-terminal stretch at 1-24 (MVKSHIGSWILVLFVAMWSDVGLC) is a signal peptide. The interaction with ADGRG6 stretch occupies residues 25 to 41 (KKRPKPGGGWNTGGSRY). The interval 25–233 (KKRPKPGGGW…ESEAYYQRRA (209 aa)) is interaction with GRB2, ERI3 and SYN1. The disordered stretch occupies residues 28 to 110 (PKPGGGWNTG…QWNKPSKPKT (83 aa)). 5 tandem repeats follow at residues 54-62 (PQGGGGWGQ), 63-70 (PHGGGWGQ), 71-78 (PHGGGWGQ), 79-86 (PHGGGWGQ), and 87-95 (PHGGGGWGQ). The segment at 54 to 95 (PQGGGGWGQPHGGGWGQPHGGGWGQPHGGGWGQPHGGGGWGQ) is 5 X 8 AA tandem repeats of P-H-G-G-G-W-G-Q. Over residues 55–97 (QGGGGWGQPHGGGWGQPHGGGWGQPHGGGWGQPHGGGGWGQGG) the composition is skewed to gly residues. Residues histidine 64, glycine 65, glycine 66, histidine 72, glycine 73, glycine 74, histidine 80, glycine 81, glycine 82, histidine 88, glycine 90, and glycine 91 each coordinate Cu(2+). The cysteines at positions 182 and 217 are disulfide-linked. Residues asparagine 184 and asparagine 200 are each glycosylated (N-linked (GlcNAc...) asparagine). The GPI-anchor amidated alanine moiety is linked to residue alanine 233. A propeptide spans 234-256 (SAILFSSPPVILLISFLIFLIVG) (removed in mature form).

The protein belongs to the prion family. As to quaternary structure, monomer and homodimer. Has a tendency to aggregate into amyloid fibrils containing a cross-beta spine, formed by a steric zipper of superposed beta-strands. Soluble oligomers may represent an intermediate stage on the path to fibril formation. Copper binding may promote oligomerization. Interacts with GRB2, APP, ERI3/PRNPIP and SYN1. Mislocalized cytosolically exposed PrP interacts with MGRN1; this interaction alters MGRN1 subcellular location and causes lysosomal enlargement. Interacts with APP. Interacts with KIAA1191. Interacts with ADGRG6.

The protein resides in the cell membrane. Its subcellular location is the golgi apparatus. Functionally, its primary physiological function is unclear. May play a role in neuronal development and synaptic plasticity. May be required for neuronal myelin sheath maintenance. May promote myelin homeostasis through acting as an agonist for ADGRG6 receptor. May play a role in iron uptake and iron homeostasis. Soluble oligomers are toxic to cultured neuroblastoma cells and induce apoptosis (in vitro). Association with GPC1 (via its heparan sulfate chains) targets PRNP to lipid rafts. Also provides Cu(2+) or Zn(2+) for the ascorbate-mediated GPC1 deaminase degradation of its heparan sulfate side chains. This is Major prion protein (PRNP) from Felis catus (Cat).